A 205-amino-acid chain; its full sequence is Large ribosomal subunit protein uL3 (205 aa).

Belongs to the universal ribosomal protein uL3 family. In terms of assembly, part of the 50S ribosomal subunit. Forms a cluster with proteins L14 and L19.

In terms of biological role, one of the primary rRNA binding proteins, it binds directly near the 3'-end of the 23S rRNA, where it nucleates assembly of the 50S subunit. This is Large ribosomal subunit protein uL3 from Porphyromonas gingivalis (strain ATCC 33277 / DSM 20709 / CIP 103683 / JCM 12257 / NCTC 11834 / 2561).